A 359-amino-acid polypeptide reads, in one-letter code: 4-hydroxy-3-methylbut-2-en-1-yl diphosphate synthase (flavodoxin) (359 aa).

[4Fe-4S] cluster is bound by residues Cys263, Cys266, Cys298, and Glu305.

This sequence belongs to the IspG family. [4Fe-4S] cluster is required as a cofactor.

The catalysed reaction is (2E)-4-hydroxy-3-methylbut-2-enyl diphosphate + oxidized [flavodoxin] + H2O + 2 H(+) = 2-C-methyl-D-erythritol 2,4-cyclic diphosphate + reduced [flavodoxin]. It functions in the pathway isoprenoid biosynthesis; isopentenyl diphosphate biosynthesis via DXP pathway; isopentenyl diphosphate from 1-deoxy-D-xylulose 5-phosphate: step 5/6. Its function is as follows. Converts 2C-methyl-D-erythritol 2,4-cyclodiphosphate (ME-2,4cPP) into 1-hydroxy-2-methyl-2-(E)-butenyl 4-diphosphate. This is 4-hydroxy-3-methylbut-2-en-1-yl diphosphate synthase (flavodoxin) from Wolinella succinogenes (strain ATCC 29543 / DSM 1740 / CCUG 13145 / JCM 31913 / LMG 7466 / NCTC 11488 / FDC 602W) (Vibrio succinogenes).